Here is a 455-residue protein sequence, read N- to C-terminus: Mu-like prophage FluMu DNA circularization protein (455 aa).

The segment at residues 368–387 (VILDNADAEQWTSYAALEQY) is a DNA-binding region (H-T-H motif).

The protein to phage Mu protein N.

In Haemophilus influenzae (strain ATCC 51907 / DSM 11121 / KW20 / Rd), this protein is Mu-like prophage FluMu DNA circularization protein.